Here is a 341-residue protein sequence, read N- to C-terminus: Outer membrane protein assembly factor BamD (341 aa).

The signal sequence occupies residues 1–17; it reads MQVKHLLLIAILALTAA. Cysteine 18 carries the N-palmitoyl cysteine lipid modification. A lipid anchor (S-diacylglycerol cysteine) is attached at cysteine 18. Over residues 289-316 the composition is skewed to basic and acidic residues; that stretch reads DVIKQYEDAEREIPAELKPENQDHSADD. The interval 289 to 330 is disordered; that stretch reads DVIKQYEDAEREIPAELKPENQDHSADDEKPESDDDEDSGRS. Residues 317–326 show a composition bias toward acidic residues; the sequence is EKPESDDDED.

Belongs to the BamD family. As to quaternary structure, part of the Bam complex.

It is found in the cell outer membrane. Its function is as follows. Part of the outer membrane protein assembly complex, which is involved in assembly and insertion of beta-barrel proteins into the outer membrane. The sequence is that of Outer membrane protein assembly factor BamD from Pseudomonas aeruginosa (strain ATCC 15692 / DSM 22644 / CIP 104116 / JCM 14847 / LMG 12228 / 1C / PRS 101 / PAO1).